Consider the following 1297-residue polypeptide: Phosphoribosylformylglycinamidine synthase (1297 aa).

The disordered stretch occupies residues 303-329 (ISPFPGAATGSGGEIRDEGATGRGAKP). 308-319 (GAATGSGGEIRD) contacts ATP. Positions 680, 719, 723, and 887 each coordinate Mg(2+). Residue Ser889 participates in ATP binding. One can recognise a Glutamine amidotransferase type-1 domain in the interval 1045–1297 (IAILREQGVN…RLFRNARMVF (253 aa)). The active-site Nucleophile is the Cys1138. Residues His1263 and Glu1265 contribute to the active site.

In the N-terminal section; belongs to the FGAMS family. As to quaternary structure, monomer.

It localises to the cytoplasm. The catalysed reaction is N(2)-formyl-N(1)-(5-phospho-beta-D-ribosyl)glycinamide + L-glutamine + ATP + H2O = 2-formamido-N(1)-(5-O-phospho-beta-D-ribosyl)acetamidine + L-glutamate + ADP + phosphate + H(+). It participates in purine metabolism; IMP biosynthesis via de novo pathway; 5-amino-1-(5-phospho-D-ribosyl)imidazole from N(2)-formyl-N(1)-(5-phospho-D-ribosyl)glycinamide: step 1/2. In terms of biological role, phosphoribosylformylglycinamidine synthase involved in the purines biosynthetic pathway. Catalyzes the ATP-dependent conversion of formylglycinamide ribonucleotide (FGAR) and glutamine to yield formylglycinamidine ribonucleotide (FGAM) and glutamate. This chain is Phosphoribosylformylglycinamidine synthase, found in Haemophilus influenzae (strain 86-028NP).